A 485-amino-acid polypeptide reads, in one-letter code: Glutamate--tRNA ligase (485 aa).

The 'HIGH' region signature appears at Pro-12 to Thr-22. Cys-109, Cys-111, Cys-136, and His-138 together coordinate Zn(2+). The 'KMSKS' region signature appears at Lys-253 to Arg-257. Lys-256 serves as a coordination point for ATP.

This sequence belongs to the class-I aminoacyl-tRNA synthetase family. Glutamate--tRNA ligase type 1 subfamily. As to quaternary structure, monomer. Zn(2+) is required as a cofactor.

Its subcellular location is the cytoplasm. It carries out the reaction tRNA(Glu) + L-glutamate + ATP = L-glutamyl-tRNA(Glu) + AMP + diphosphate. Catalyzes the attachment of glutamate to tRNA(Glu) in a two-step reaction: glutamate is first activated by ATP to form Glu-AMP and then transferred to the acceptor end of tRNA(Glu). The polypeptide is Glutamate--tRNA ligase (Agrobacterium fabrum (strain C58 / ATCC 33970) (Agrobacterium tumefaciens (strain C58))).